The chain runs to 85 residues: Putative membrane protein insertion efficiency factor (85 aa).

A disordered region spans residues Lys-62 to His-85.

This sequence belongs to the UPF0161 family.

It is found in the cell membrane. Functionally, could be involved in insertion of integral membrane proteins into the membrane. This chain is Putative membrane protein insertion efficiency factor, found in Staphylococcus aureus (strain Mu3 / ATCC 700698).